A 123-amino-acid polypeptide reads, in one-letter code: Fluoride-specific ion channel FluC 2 (123 aa).

2 helical membrane passes run 1 to 21 (MTML…FLLD) and 30 to 50 (VPVP…LGLI). Residues Gly74 and Thr77 each coordinate Na(+). The helical transmembrane segment at 99-119 (ALHCMGMAIAGVLAAILGLAL) threads the bilayer.

It belongs to the fluoride channel Fluc/FEX (TC 1.A.43) family.

The protein localises to the cell membrane. The enzyme catalyses fluoride(in) = fluoride(out). Its activity is regulated as follows. Na(+) is not transported, but it plays an essential structural role and its presence is essential for fluoride channel function. Its function is as follows. Fluoride-specific ion channel. Important for reducing fluoride concentration in the cell, thus reducing its toxicity. This chain is Fluoride-specific ion channel FluC 2, found in Cutibacterium acnes (strain DSM 16379 / KPA171202) (Propionibacterium acnes).